The primary structure comprises 306 residues: Ubiquitin carboxyl-terminal hydrolase RPN11 (306 aa).

At Met1 the chain carries N-acetylmethionine. Positions 1 to 20 are disordered; sequence MERLQRLMMNSKVGSADTGR. An MPN domain is found at 27–162; it reads VYISSIALLK…IDAFRLIDTG (136 aa). Residues His109, His111, and Asp122 each coordinate Zn(2+). The JAMM motif motif lies at 109–122; that stretch reads HSHPGFGCWLSSVD.

Belongs to the peptidase M67A family. Component of the lid subcomplex of the 19S proteasome regulatory particle complex (also named PA700 complex). The 26S proteasome consists of a 20S proteasome core and two 19S regulatory subunits. Interacts directly with RPN8 and STS1. Post-translationally, N-acetylated by NAT3.

The enzyme catalyses Thiol-dependent hydrolysis of ester, thioester, amide, peptide and isopeptide bonds formed by the C-terminal Gly of ubiquitin (a 76-residue protein attached to proteins as an intracellular targeting signal).. Its function is as follows. Component of the lid subcomplex of the 26S proteasome, a multiprotein complex involved in the ATP-dependent degradation of ubiquitinated proteins. RPN11 is the only catalytically active member of the lid and serves as the essential deubiquitinase of the proteasome. The chain is Ubiquitin carboxyl-terminal hydrolase RPN11 (RPN11) from Saccharomyces cerevisiae (strain ATCC 204508 / S288c) (Baker's yeast).